Consider the following 901-residue polypeptide: MutS protein homolog 5 (901 aa).

643–650 (GANASGKS) lines the ATP pocket.

It belongs to the DNA mismatch repair MutS family. Heterooligomer of MSH4 and MSH5.

In terms of biological role, involved in meiotic recombination. Facilitate crossovers between homologs during meiosis. The polypeptide is MutS protein homolog 5 (MSH5) (Saccharomyces cerevisiae (strain ATCC 204508 / S288c) (Baker's yeast)).